The chain runs to 637 residues: Type II restriction enzyme and methyltransferase RM.BcgI (637 aa).

In the C-terminal section; belongs to the N(4)/N(6)-methyltransferase family. Heterotrimer of two A and one B subunit. Both subunits are necessary for DNA-binding, which is sequence non-specific. Requires Mg(2+) as cofactor.

The enzyme catalyses Endonucleolytic cleavage of DNA to give specific double-stranded fragments with terminal 5'-phosphates.. It carries out the reaction a 2'-deoxyadenosine in DNA + S-adenosyl-L-methionine = an N(6)-methyl-2'-deoxyadenosine in DNA + S-adenosyl-L-homocysteine + H(+). With respect to regulation, DNA restriction requires S-adenosyl-L-methionine and Mg(2+), and is inhibited by S-adenosyl-homocysteine. SAM may be a cofactor for DNA restriction. Functionally, a B, G, H and S subtype restriction enzyme that recognizes the double-stranded sequence 5'-CGAN(6)TGC-3' and cleaves bilaterally and symmetrically 10 base pairs upstream and 12 base pairs downstream of the sequence to release a 34-base pair fragment. Methylation of the recognition sequence occurs on the adenine in either one or both strands; seems to methylate restricted DNA. This subunit has no methylation or DNA restriction activity on its own. This is Type II restriction enzyme and methyltransferase RM.BcgI from Heyndrickxia coagulans (Weizmannia coagulans).